The primary structure comprises 197 residues: Transposon Tn552 resolvase (197 aa).

The 136-residue stretch at 1–136 (MKIGYARVST…AGRIAARARG (136 aa)) folds into the Resolvase/invertase-type recombinase catalytic domain. The active-site O-(5'-phospho-DNA)-serine intermediate is Ser9. The H-T-H motif DNA-binding region spans 163-182 (IKTIAEQWQVSRTTIYRYLN).

This sequence belongs to the site-specific recombinase resolvase family.

Functionally, resolvase catalyzes the resolution (a site-specific recombination) of the cointegrated replicon to yield the final transposition products. In Staphylococcus aureus, this protein is Transposon Tn552 resolvase (tnpR).